A 101-amino-acid chain; its full sequence is Urease subunit beta (101 aa).

It belongs to the urease beta subunit family. In terms of assembly, heterotrimer of UreA (gamma), UreB (beta) and UreC (alpha) subunits. Three heterotrimers associate to form the active enzyme.

It localises to the cytoplasm. The catalysed reaction is urea + 2 H2O + H(+) = hydrogencarbonate + 2 NH4(+). The protein operates within nitrogen metabolism; urea degradation; CO(2) and NH(3) from urea (urease route): step 1/1. The polypeptide is Urease subunit beta (Agrobacterium fabrum (strain C58 / ATCC 33970) (Agrobacterium tumefaciens (strain C58))).